We begin with the raw amino-acid sequence, 73 residues long: Antimicrobial peptide TsAP-1 (73 aa).

The N-terminal stretch at 1–22 is a signal peptide; sequence MQIKHLITLFFLVLIVADQCSA. Lys39 is modified (lysine amide). Positions 45–73 are excised as a propeptide; the sequence is EISAQIEQYKDLQKREAELEELLDRLPMY.

In terms of tissue distribution, expressed by the venom gland.

The protein localises to the secreted. Functionally, has a low antimicrobial activity against S.aureus, E.coli, and C.albicans (MICs 120-160 uM). Has a low hemolytic activity (4% at 160 uM). Also inhibits the growth of two cancer cell lines on a total of five (the squamous carcinoma cell line H157 (IC(50)=55.9 uM) and the lung adenocarcinoma cell line H838 (IC(50)=52.5 uM)). This chain is Antimicrobial peptide TsAP-1, found in Tityus serrulatus (Brazilian scorpion).